The sequence spans 294 residues: Nucleotide-binding protein Swol_0262 (294 aa).

15–22 (GLSGAGKT) provides a ligand contact to ATP. Residue 65–68 (DVRG) participates in GTP binding.

This sequence belongs to the RapZ-like family.

Displays ATPase and GTPase activities. The chain is Nucleotide-binding protein Swol_0262 from Syntrophomonas wolfei subsp. wolfei (strain DSM 2245B / Goettingen).